Consider the following 245-residue polypeptide: Probable transcriptional regulatory protein pc1328 (245 aa).

This sequence belongs to the TACO1 family.

The protein resides in the cytoplasm. The sequence is that of Probable transcriptional regulatory protein pc1328 from Protochlamydia amoebophila (strain UWE25).